Consider the following 458-residue polypeptide: UDP-N-acetylmuramate--L-alanine ligase (458 aa).

ATP is bound at residue glycine 119–threonine 125.

This sequence belongs to the MurCDEF family.

The protein resides in the cytoplasm. It carries out the reaction UDP-N-acetyl-alpha-D-muramate + L-alanine + ATP = UDP-N-acetyl-alpha-D-muramoyl-L-alanine + ADP + phosphate + H(+). The protein operates within cell wall biogenesis; peptidoglycan biosynthesis. Cell wall formation. This Phocaeicola vulgatus (strain ATCC 8482 / DSM 1447 / JCM 5826 / CCUG 4940 / NBRC 14291 / NCTC 11154) (Bacteroides vulgatus) protein is UDP-N-acetylmuramate--L-alanine ligase.